The following is a 149-amino-acid chain: Calmodulin (149 aa).

The residue at position 2 (Ala2) is an N-acetylalanine. EF-hand domains follow at residues Glu8–Asn43, Pro44–Asp79, Asp81–Lys116, and Leu117–Lys149. Ca(2+) contacts are provided by Asp21, Asp23, Asp25, Gln27, Glu32, Asp57, Asp59, Asn61, Thr63, Glu68, Asp94, Asp96, Asn98, Glu105, Asp130, Asp132, Asp134, Arg136, and Glu141.

Belongs to the calmodulin family.

Its function is as follows. Calmodulin mediates the control of a large number of enzymes, ion channels and other proteins by Ca(2+). Among the enzymes to be stimulated by the calmodulin-Ca(2+) complex are a number of protein kinases and phosphatases. The protein is Calmodulin of Colletotrichum gloeosporioides (Anthracnose fungus).